A 157-amino-acid polypeptide reads, in one-letter code: Transcriptional repressor NrdR (157 aa).

Residues C3–C34 fold into a zinc finger. The ATP-cone domain occupies L49–D139.

This sequence belongs to the NrdR family. The cofactor is Zn(2+).

In terms of biological role, negatively regulates transcription of bacterial ribonucleotide reductase nrd genes and operons by binding to NrdR-boxes. The polypeptide is Transcriptional repressor NrdR (Caulobacter vibrioides (strain ATCC 19089 / CIP 103742 / CB 15) (Caulobacter crescentus)).